The chain runs to 264 residues: Acyl-[acyl-carrier-protein]--UDP-N-acetylglucosamine O-acyltransferase (264 aa).

This sequence belongs to the transferase hexapeptide repeat family. LpxA subfamily. Homotrimer.

Its subcellular location is the cytoplasm. The enzyme catalyses a (3R)-hydroxyacyl-[ACP] + UDP-N-acetyl-alpha-D-glucosamine = a UDP-3-O-[(3R)-3-hydroxyacyl]-N-acetyl-alpha-D-glucosamine + holo-[ACP]. It functions in the pathway glycolipid biosynthesis; lipid IV(A) biosynthesis; lipid IV(A) from (3R)-3-hydroxytetradecanoyl-[acyl-carrier-protein] and UDP-N-acetyl-alpha-D-glucosamine: step 1/6. In terms of biological role, involved in the biosynthesis of lipid A, a phosphorylated glycolipid that anchors the lipopolysaccharide to the outer membrane of the cell. This Albidiferax ferrireducens (strain ATCC BAA-621 / DSM 15236 / T118) (Rhodoferax ferrireducens) protein is Acyl-[acyl-carrier-protein]--UDP-N-acetylglucosamine O-acyltransferase.